A 284-amino-acid chain; its full sequence is L-ribulose-5-phosphate 3-epimerase UlaE (284 aa).

The protein belongs to the L-ribulose-5-phosphate 3-epimerase family.

The enzyme catalyses L-ribulose 5-phosphate = L-xylulose 5-phosphate. It participates in cofactor degradation; L-ascorbate degradation; D-xylulose 5-phosphate from L-ascorbate: step 3/4. Functionally, catalyzes the isomerization of L-xylulose-5-phosphate to L-ribulose-5-phosphate. Is involved in the anaerobic L-ascorbate utilization. This is L-ribulose-5-phosphate 3-epimerase UlaE from Escherichia coli (strain 55989 / EAEC).